The chain runs to 138 residues: Putative pre-16S rRNA nuclease (138 aa).

This sequence belongs to the YqgF nuclease family.

Its subcellular location is the cytoplasm. In terms of biological role, could be a nuclease involved in processing of the 5'-end of pre-16S rRNA. This is Putative pre-16S rRNA nuclease from Helicobacter hepaticus (strain ATCC 51449 / 3B1).